The sequence spans 248 residues: Large ribosomal subunit protein uL30A (248 aa).

The tract at residues 1-44 (MSQKKQKIQVEQKVPENVAKKTQRDSKLRDAVAKRRTERLAANK) is disordered. Residues 8–41 (IQVEQKVPENVAKKTQRDSKLRDAVAKRRTERLA) are compositionally biased toward basic and acidic residues.

The protein belongs to the universal ribosomal protein uL30 family.

Its function is as follows. Binds to G-rich structures in 28S rRNA and in mRNAs. Plays a regulatory role in the translation apparatus; inhibits cell-free translation of mRNAs. In Paramecium tetraurelia, this protein is Large ribosomal subunit protein uL30A (Rpl7-1).